We begin with the raw amino-acid sequence, 436 residues long: F-box/LRR-repeat protein 20 (436 aa).

Residues 22 to 68 enclose the F-box domain; the sequence is AVINKKLPKELLLRIFSFLDVVTLCRCAQVSRAWNVLALDGSNWQRI. 13 LRR repeats span residues 74-100, 101-126, 127-152, 153-178, 179-204, 205-230, 231-256, 257-282, 283-308, 309-334, 335-363, 364-388, and 389-414; these read QRDIEGRVVENISKRCGGFLRKLSLRG, CLGVGDNALRTFAQNCRNIEVLSLNG, CTKTTDATCTSLSKFCSKLRHLDLAS, CTSITNMSLKALSEGCPLLEQLNISW, CDQVTKDGIQALVRGCGGLKALFLKG, CTQLEDEALKYIGAHCPELVTLNLQT, CLQITDEGLITICRGCHKLQSLCASG, CSNITDAILNALGQNCPRLRILEVAR, CSQLTDVGFTTLARNCHELEKMDLEE, CVQITDSTLIQLSIHCPRLQVLSLSH, CELITDDGIRHLGNGACAHDQLEVIELDN, CPLITDASLEHLKSCHSLERIELYD, and CQQITRAGIKRLRTHLPNIKVHAYFA. Residue Thr-417 is modified to Phosphothreonine. Ser-421 is modified (phosphoserine).

As to quaternary structure, interacts with SKP1 and CUL1. As to expression, highly expressed in brain.

The protein localises to the cytoplasm. Substrate-recognition component of the SCF (SKP1-CUL1-F-box protein)-type E3 ubiquitin ligase complex. Isoform 3 regulates neural transmission by binding and ubiquitinating RIMS1, a modulator of presynaptic plasticity. The protein is F-box/LRR-repeat protein 20 (Fbxl20) of Mus musculus (Mouse).